The primary structure comprises 233 residues: Small ribosomal subunit protein uS2 (233 aa).

This sequence belongs to the universal ribosomal protein uS2 family.

This is Small ribosomal subunit protein uS2 from Clostridium botulinum (strain Eklund 17B / Type B).